A 625-amino-acid polypeptide reads, in one-letter code: tRNA uridine 5-carboxymethylaminomethyl modification enzyme MnmG (625 aa).

Residues 9–14 (GGGHAG), V121, and S176 each bind FAD. 270 to 284 (GPRYCPSIEDKIYRF) provides a ligand contact to NAD(+). An FAD-binding site is contributed by Q367.

The protein belongs to the MnmG family. In terms of assembly, homodimer. Heterotetramer of two MnmE and two MnmG subunits. Requires FAD as cofactor.

It localises to the cytoplasm. Its function is as follows. NAD-binding protein involved in the addition of a carboxymethylaminomethyl (cmnm) group at the wobble position (U34) of certain tRNAs, forming tRNA-cmnm(5)s(2)U34. This is tRNA uridine 5-carboxymethylaminomethyl modification enzyme MnmG from Nitratiruptor sp. (strain SB155-2).